The following is a 131-amino-acid chain: Small ribosomal subunit protein uS8 (131 aa).

Belongs to the universal ribosomal protein uS8 family. As to quaternary structure, part of the 30S ribosomal subunit. Contacts proteins S5 and S12.

Its function is as follows. One of the primary rRNA binding proteins, it binds directly to 16S rRNA central domain where it helps coordinate assembly of the platform of the 30S subunit. The polypeptide is Small ribosomal subunit protein uS8 (Legionella pneumophila subsp. pneumophila (strain Philadelphia 1 / ATCC 33152 / DSM 7513)).